The chain runs to 252 residues: Ditrans,polycis-undecaprenyl-diphosphate synthase ((2E,6E)-farnesyl-diphosphate specific) (252 aa).

Residue D24 is part of the active site. Mg(2+) is bound at residue D24. Residues 25-28, W29, R37, H41, and 69-71 contribute to the substrate site; these read GNGR and SSE. N72 acts as the Proton acceptor in catalysis. 3 residues coordinate substrate: W73, R75, and R192. H197 serves as a coordination point for Mg(2+). 198–200 serves as a coordination point for substrate; it reads RIS. E211 lines the Mg(2+) pocket.

Belongs to the UPP synthase family. In terms of assembly, homodimer. The cofactor is Mg(2+).

The catalysed reaction is 8 isopentenyl diphosphate + (2E,6E)-farnesyl diphosphate = di-trans,octa-cis-undecaprenyl diphosphate + 8 diphosphate. Catalyzes the sequential condensation of isopentenyl diphosphate (IPP) with (2E,6E)-farnesyl diphosphate (E,E-FPP) to yield (2Z,6Z,10Z,14Z,18Z,22Z,26Z,30Z,34E,38E)-undecaprenyl diphosphate (di-trans,octa-cis-UPP). UPP is the precursor of glycosyl carrier lipid in the biosynthesis of bacterial cell wall polysaccharide components such as peptidoglycan and lipopolysaccharide. The protein is Ditrans,polycis-undecaprenyl-diphosphate synthase ((2E,6E)-farnesyl-diphosphate specific) of Yersinia pestis.